A 311-amino-acid chain; its full sequence is MTKLIFMGTPDFSATVLKGLLTDDRYEILAVVTQPDRAVGRKKVIQETPVKQAAKEAGLSIYQPEKLSGSPEMEELMKLGADGIVTAAFGQFLPSKLLDSMDFAVNVHASLLPRHRGGAPIHYALIQGDEEAGVTIMEMVKEMDAGDMISRRSIPITDEDNVGTLFEKLALVGRDLLLDTLPAYIAGDIKPEPQDTSQVTFSPNIKPEEEKLDWNKTNRQLFNQIRGMNPWPVAHAFLKGDRFKIYEALPVEGQGNPGEILSIGKKELIVATAEGALSLKQVQPAGKPKMDIASFLNGVGRTLTVGERFGD.

A (6S)-5,6,7,8-tetrahydrofolate-binding site is contributed by 110 to 113 (SLLP).

This sequence belongs to the Fmt family.

The catalysed reaction is L-methionyl-tRNA(fMet) + (6R)-10-formyltetrahydrofolate = N-formyl-L-methionyl-tRNA(fMet) + (6S)-5,6,7,8-tetrahydrofolate + H(+). Functionally, attaches a formyl group to the free amino group of methionyl-tRNA(fMet). The formyl group appears to play a dual role in the initiator identity of N-formylmethionyl-tRNA by promoting its recognition by IF2 and preventing the misappropriation of this tRNA by the elongation apparatus. In Streptococcus pneumoniae (strain JJA), this protein is Methionyl-tRNA formyltransferase.